Reading from the N-terminus, the 321-residue chain is Peroxidase 70 (321 aa).

The N-terminal stretch at 1-25 is a signal peptide; that stretch reads MASSSFTSLSVMVLLCLAAAAVASA. Pyrrolidone carboxylic acid is present on Gln26. 4 disulfides stabilise this stretch: Cys36–Cys116, Cys69–Cys74, Cys122–Cys317, and Cys201–Cys226. The active-site Proton acceptor is His67. Positions 68, 71, 73, 75, and 77 each coordinate Ca(2+). Residue Asn81 is glycosylated (N-linked (GlcNAc...) asparagine). Pro164 serves as a coordination point for substrate. A glycan (N-linked (GlcNAc...) asparagine) is linked at Asn172. His194 contacts heme b. Thr195 provides a ligand contact to Ca(2+). Asn210 carries N-linked (GlcNAc...) asparagine glycosylation. The Ca(2+) site is built by Asp241, Thr244, and Asp249.

The protein belongs to the peroxidase family. Classical plant (class III) peroxidase subfamily. The cofactor is heme b. It depends on Ca(2+) as a cofactor.

Its subcellular location is the secreted. The catalysed reaction is 2 a phenolic donor + H2O2 = 2 a phenolic radical donor + 2 H2O. Its function is as follows. Removal of H(2)O(2), oxidation of toxic reductants, biosynthesis and degradation of lignin, suberization, auxin catabolism, response to environmental stresses such as wounding, pathogen attack and oxidative stress. These functions might be dependent on each isozyme/isoform in each plant tissue. This chain is Peroxidase 70 (PER70), found in Zea mays (Maize).